We begin with the raw amino-acid sequence, 355 residues long: Nicotinate-nucleotide--dimethylbenzimidazole phosphoribosyltransferase (355 aa).

Residue glutamate 321 is the Proton acceptor of the active site.

Belongs to the CobT family.

It catalyses the reaction 5,6-dimethylbenzimidazole + nicotinate beta-D-ribonucleotide = alpha-ribazole 5'-phosphate + nicotinate + H(+). It functions in the pathway nucleoside biosynthesis; alpha-ribazole biosynthesis; alpha-ribazole from 5,6-dimethylbenzimidazole: step 1/2. Functionally, catalyzes the synthesis of alpha-ribazole-5'-phosphate from nicotinate mononucleotide (NAMN) and 5,6-dimethylbenzimidazole (DMB). The sequence is that of Nicotinate-nucleotide--dimethylbenzimidazole phosphoribosyltransferase from Desulfotalea psychrophila (strain LSv54 / DSM 12343).